Consider the following 418-residue polypeptide: MLLLVDCSSCRTPLHLPPGATRIRCAICHAFTLIAPEPRLQSHASASPFPFPNSSPAPSTFIYPPPTPSPYTHAPHAPSPFNHAPPDSYPFTHAPPASSPFNHAPPGPPPPVHGQKRAVIVGVSYKNTKDELKGCINDANCMKFMLMKRFQFPESCILMLTEEEADPMRWPTKNNITMAMHWLVLSCKPGDSLVFHFSGHGNNQMDDNGDEVDGFDETLLPVDHRTSGVIVDDEINATIVRPLPYGVKLHAIVDACHSGTVMDLPYLCRMDRLGNYEWEDHRPKTGMWKGTSGGEVFSFTGCDDDQTSADTPQLSGSAWTGAMTYAFIQAIERGHGMTYGSLLNAMRSTVHEIFDKNKGRELVEVGGADFLSTLLGLLILGASPPDEEEEVNQAPQKTQEPQLSANEAFAVYEKPFSL.

Residues 68–113 form a disordered region; sequence PSPYTHAPHAPSPFNHAPPDSYPFTHAPPASSPFNHAPPGPPPPVH. The span at 70 to 80 shows a compositional bias: low complexity; it reads PYTHAPHAPSP. Residues 103-112 show a composition bias toward pro residues; the sequence is HAPPGPPPPV. Active-site residues include histidine 200 and cysteine 256. The disordered stretch occupies residues 385-406; that stretch reads PDEEEEVNQAPQKTQEPQLSAN. Positions 393–405 are enriched in polar residues; that stretch reads QAPQKTQEPQLSA.

The protein belongs to the peptidase C14B family.

Functionally, acts as a negative regulator of oxidative stress cell death and hypersensitive cell death response mediated by immune response. Acts via indirect or direct regulation of AMC1 at postranscriptional level. In Arabidopsis thaliana (Mouse-ear cress), this protein is Metacaspase-2 (AMC2).